A 227-amino-acid polypeptide reads, in one-letter code: Cleavage and polyadenylation specificity factor subunit 5 (227 aa).

An N-acetylserine modification is found at S2. Residues 2–147 (SVVPPNRSQT…DWVIDDCIGN (146 aa)) form a necessary for RNA-binding region. R15 bears the Omega-N-methylarginine mark. N6-acetyllysine occurs at positions 23 and 29. A Phosphotyrosine modification is found at Y40. At K56 the chain carries N6-acetyllysine. One can recognise a Nudix hydrolase domain in the interval 76-201 (MRRTVEGVLI…KLVAAPLFEL (126 aa)). Positions 81 to 160 (EGVLIVHEHR…PNFEPPQYPY (80 aa)) are necessary for interactions with PAPOLA and PABPN1. The interaction with RNA stretch occupies residues 102-104 (TFF). Residues 109–130 (GELNPGEDEVEGLKRLMTEILG) carry the Nudix box motif.

It belongs to the Nudix hydrolase family. CPSF5 subfamily. Homodimer (via N- and C-terminus); binds RNA as homodimer. Component of the cleavage factor Im (CFIm) complex which is a heterotetramer composed of two subunits of NUDT21/CPSF5 and two subunits of CPSF6 or CPSF7 or a heterodimer of CPSF6 and CPSF7. The cleavage factor Im (CFIm) complex associates with the CPSF and CSTF complexes to promote the assembly of the core mRNA 3'-processing machinery. Interacts with CPSF6 (via the RRM domain); this interaction is direct and enhances binding to RNA. Interacts with CPSF7. Interacts with FIP1L1; this interaction occurs in a RNA sequence-specific manner. Interacts with PABPN1. Interacts (via N-terminus) with PAPOLA (via C-terminus); this interaction is direct and diminished by acetylation. Interacts with SNRNP70. Interacts with VIRMA. Acetylated mainly by p300/CBP, recruited to the complex by CPSF6. Acetylation decreases interaction with PAPAO. Deacetylated by the class I/II HDACs, HDAC1, HDAC3 and HDAC10, and by the class III HDACs, SIRT1 and SIRT2. Expressed in testis. Expressed in male germ cells (at protein level).

The protein localises to the nucleus. The protein resides in the cytoplasm. Component of the cleavage factor Im (CFIm) complex that functions as an activator of the pre-mRNA 3'-end cleavage and polyadenylation processing required for the maturation of pre-mRNA into functional mRNAs. CFIm contributes to the recruitment of multiprotein complexes on specific sequences on the pre-mRNA 3'-end, so called cleavage and polyadenylation signals (pA signals). Most pre-mRNAs contain multiple pA signals, resulting in alternative cleavage and polyadenylation (APA) producing mRNAs with variable 3'-end formation. The CFIm complex acts as a key regulator of cleavage and polyadenylation site choice during APA through its binding to 5'-UGUA-3' elements localized in the 3'-untranslated region (UTR) for a huge number of pre-mRNAs. NUDT21/CPSF5 activates indirectly the mRNA 3'-processing machinery by recruiting CPSF6 and/or CPSF7. Binds to 5'-UGUA-3' elements localized upstream of pA signals that act as enhancers of pre-mRNA 3'-end processing. The homodimer mediates simultaneous sequence-specific recognition of two 5'-UGUA-3' elements within the pre-mRNA. Plays a role in somatic cell fate transitions and pluripotency by regulating widespread changes in gene expression through an APA-dependent function. Binds to chromatin. Binds to, but does not hydrolyze mono- and di-adenosine nucleotides. The polypeptide is Cleavage and polyadenylation specificity factor subunit 5 (Mus musculus (Mouse)).